A 242-amino-acid polypeptide reads, in one-letter code: 1-(5-phosphoribosyl)-5-[(5-phosphoribosylamino)methylideneamino] imidazole-4-carboxamide isomerase (242 aa).

Residue Asp-10 is the Proton acceptor of the active site. Residue Asp-132 is the Proton donor of the active site.

The protein belongs to the HisA/HisF family.

The protein localises to the cytoplasm. It catalyses the reaction 1-(5-phospho-beta-D-ribosyl)-5-[(5-phospho-beta-D-ribosylamino)methylideneamino]imidazole-4-carboxamide = 5-[(5-phospho-1-deoxy-D-ribulos-1-ylimino)methylamino]-1-(5-phospho-beta-D-ribosyl)imidazole-4-carboxamide. It functions in the pathway amino-acid biosynthesis; L-histidine biosynthesis; L-histidine from 5-phospho-alpha-D-ribose 1-diphosphate: step 4/9. This chain is 1-(5-phosphoribosyl)-5-[(5-phosphoribosylamino)methylideneamino] imidazole-4-carboxamide isomerase, found in Streptococcus sanguinis (strain SK36).